A 52-amino-acid chain; its full sequence is Conotoxin-like peptide 2 (52 aa).

An N-terminal signal peptide occupies residues 1 to 18; the sequence is MKFSTILLLVCPTVALSA. 3 cysteine pairs are disulfide-bonded: cysteine 24–cysteine 38, cysteine 31–cysteine 42, and cysteine 37–cysteine 49.

The protein localises to the secreted. The polypeptide is Conotoxin-like peptide 2 (CTL-2) (Orgyia pseudotsugata (Douglas-fir tussock moth)).